The following is a 4318-amino-acid chain: Cytoplasmic dynein 2 heavy chain 1 (4318 aa).

Residues 1-1658 (MPAEDARKEY…IMRMVDAEFQ (1658 aa)) form a stem region. ATP is bound at residue 147–154 (LKSLVRKQ). Coiled coils occupy residues 1328–1354 (DKAT…QRKW) and 1402–1431 (LRTT…RSIL). AAA regions lie at residues 1659–1883 (YTYE…VLRG), 1951–2171 (DAIR…RQGD), 2261–2515 (ASDF…WVLG), and 2623–2871 (TFAR…SSSV). 1697-1704 (GPAGTGKT) contributes to the ATP binding site. A coiled-coil region spans residues 1959-1986 (EHNLVVMETQVKKALELYEQLRQRMGVV). Residues 1989 to 1996 (GPSGSGKS), 2301 to 2308 (GPDGCGKG), and 2661 to 2668 (GRSGVGRR) contribute to the ATP site. The stalk stretch occupies residues 2888-3176 (DVYRRKKQGV…YELEKEQETI (289 aa)). 2 coiled-coil regions span residues 2908–2989 (VAKL…AEIE) and 3423–3480 (QHEK…KTKE). AAA regions lie at residues 3251–3487 (LSTE…TITQ) and 3699–3914 (MTFF…IIDR).

This sequence belongs to the dynein heavy chain family. The cytoplasmic dynein complex 2 is probably composed by a heavy chain DYH1B homodimer and a number of light intermediate chains.

It is found in the cytoplasm. It localises to the cytoskeleton. Its subcellular location is the cilium axoneme. The protein resides in the cell membrane. In terms of biological role, may function as a motor for intraflagellar retrograde transport. Functions in cilia biogenesis. In Tripneustes gratilla (Hawaian sea urchin), this protein is Cytoplasmic dynein 2 heavy chain 1 (DYH1B).